The sequence spans 179 residues: Inner membrane-spanning protein YciB (179 aa).

Transmembrane regions (helical) follow at residues 11–31, 52–69, 71–91, 121–141, and 149–169; these read ILFF…TLII, LIMG…AYFN, LEFL…ILLV, LGWA…SQYL, and FKTF…GVYI.

The protein belongs to the YciB family.

The protein localises to the cell inner membrane. Its function is as follows. Plays a role in cell envelope biogenesis, maintenance of cell envelope integrity and membrane homeostasis. The chain is Inner membrane-spanning protein YciB from Histophilus somni (strain 129Pt) (Haemophilus somnus).